Reading from the N-terminus, the 337-residue chain is Hsp90 co-chaperone Cdc37-like 1 (337 aa).

Positions 1 to 11 are enriched in pro residues; sequence MEQPWPPPGPW. The interval 1–42 is disordered; that stretch reads MEQPWPPPGPWSLPRAEGEAEEENDLDVFPSSPRCPQLPGGS. The segment at 2–171 is self-association; it reads EQPWPPPGPW…YEQKIRHFGM (170 aa). Residues S32 and S88 each carry the phosphoserine modification. The stretch at 85-122 forms a coiled coil; the sequence is NSESLDQEHAKAQIAVSELRQREEEWRQKEEALVQREK. The segment at 147–277 is self-association and interaction with Hsp90; that stretch reads KDTEDEDKSE…SRVRLYSQSQ (131 aa). The interaction with Hsp70 stretch occupies residues 267-337; the sequence is KSRVRLYSQS…DDEPKMMDTV (71 aa). A required for interaction with STIP1 region spans residues 278–337; that stretch reads SFQPMTVQNHVPHSGVGSIGLLESLPQNPDYLQYSINTALCSLNSVVHKEDDEPKMMDTV.

The protein belongs to the CDC37 family. In terms of assembly, self-associates. Forms complexes with Hsp70 and Hsp90. Interacts with CDC37, FKBP4, PPID and STIP1.

The protein localises to the cytoplasm. Functionally, co-chaperone that binds to numerous proteins and promotes their interaction with Hsp70 and Hsp90. This Pongo abelii (Sumatran orangutan) protein is Hsp90 co-chaperone Cdc37-like 1 (CDC37L1).